Here is a 201-residue protein sequence, read N- to C-terminus: L(+)-tartrate dehydratase subunit beta (201 aa).

His37 is a catalytic residue.

It belongs to the class-I fumarase family. In terms of assembly, heterotetramer of two alpha and two beta subunits.

The catalysed reaction is (2R,3R)-tartrate = oxaloacetate + H2O. This is L(+)-tartrate dehydratase subunit beta (ttdB) from Shigella boydii serotype 4 (strain Sb227).